Here is a 348-residue protein sequence, read N- to C-terminus: Anthranilate phosphoribosyltransferase (348 aa).

5-phospho-alpha-D-ribose 1-diphosphate contacts are provided by residues glycine 80, 83–84, threonine 88, 90–93, 108–116, and serine 120; these read GD, NVST, and KHGNRSVSS. Glycine 80 is an anthranilate binding site. Serine 92 contacts Mg(2+). Asparagine 111 contributes to the anthranilate binding site. Arginine 166 is a binding site for anthranilate. 2 residues coordinate Mg(2+): aspartate 224 and glutamate 225.

It belongs to the anthranilate phosphoribosyltransferase family. As to quaternary structure, homodimer. Mg(2+) is required as a cofactor.

The catalysed reaction is N-(5-phospho-beta-D-ribosyl)anthranilate + diphosphate = 5-phospho-alpha-D-ribose 1-diphosphate + anthranilate. The protein operates within amino-acid biosynthesis; L-tryptophan biosynthesis; L-tryptophan from chorismate: step 2/5. Catalyzes the transfer of the phosphoribosyl group of 5-phosphorylribose-1-pyrophosphate (PRPP) to anthranilate to yield N-(5'-phosphoribosyl)-anthranilate (PRA). This Sorangium cellulosum (strain So ce56) (Polyangium cellulosum (strain So ce56)) protein is Anthranilate phosphoribosyltransferase.